The chain runs to 649 residues: Glycerol-3-phosphate dehydrogenase, mitochondrial (649 aa).

FAD is bound at residue 69 to 97 (DVLIIGGGATGTGVAVDASTRGLNVCLLE).

Belongs to the FAD-dependent glycerol-3-phosphate dehydrogenase family. The cofactor is FAD.

The protein resides in the mitochondrion. It carries out the reaction a quinone + sn-glycerol 3-phosphate = dihydroxyacetone phosphate + a quinol. Its pathway is polyol metabolism; glycerol degradation via glycerol kinase pathway; glycerone phosphate from sn-glycerol 3-phosphate (anaerobic route): step 1/1. The polypeptide is Glycerol-3-phosphate dehydrogenase, mitochondrial (gut2) (Schizosaccharomyces pombe (strain 972 / ATCC 24843) (Fission yeast)).